We begin with the raw amino-acid sequence, 241 residues long: Leucyl/phenylalanyl-tRNA--protein transferase (241 aa).

This sequence belongs to the L/F-transferase family.

It localises to the cytoplasm. It catalyses the reaction N-terminal L-lysyl-[protein] + L-leucyl-tRNA(Leu) = N-terminal L-leucyl-L-lysyl-[protein] + tRNA(Leu) + H(+). The catalysed reaction is N-terminal L-arginyl-[protein] + L-leucyl-tRNA(Leu) = N-terminal L-leucyl-L-arginyl-[protein] + tRNA(Leu) + H(+). It carries out the reaction L-phenylalanyl-tRNA(Phe) + an N-terminal L-alpha-aminoacyl-[protein] = an N-terminal L-phenylalanyl-L-alpha-aminoacyl-[protein] + tRNA(Phe). Functionally, functions in the N-end rule pathway of protein degradation where it conjugates Leu, Phe and, less efficiently, Met from aminoacyl-tRNAs to the N-termini of proteins containing an N-terminal arginine or lysine. This chain is Leucyl/phenylalanyl-tRNA--protein transferase, found in Neisseria meningitidis serogroup A / serotype 4A (strain DSM 15465 / Z2491).